A 123-amino-acid polypeptide reads, in one-letter code: Small ribosomal subunit protein uS13 (123 aa).

The disordered stretch occupies residues 95 to 123 (GLPVRGQKTKTNARTRKGPKKAVASKKKK).

It belongs to the universal ribosomal protein uS13 family. As to quaternary structure, part of the 30S ribosomal subunit. Forms a loose heterodimer with protein S19. Forms two bridges to the 50S subunit in the 70S ribosome.

Located at the top of the head of the 30S subunit, it contacts several helices of the 16S rRNA. In the 70S ribosome it contacts the 23S rRNA (bridge B1a) and protein L5 of the 50S subunit (bridge B1b), connecting the 2 subunits; these bridges are implicated in subunit movement. Contacts the tRNAs in the A and P-sites. The chain is Small ribosomal subunit protein uS13 from Clostridium acetobutylicum (strain ATCC 824 / DSM 792 / JCM 1419 / IAM 19013 / LMG 5710 / NBRC 13948 / NRRL B-527 / VKM B-1787 / 2291 / W).